Reading from the N-terminus, the 172-residue chain is VQ motif-containing protein 17 (172 aa).

Residues 51–60 carry the VQ motif; the sequence is FREIVQNLTG. The segment at 60 to 97 is disordered; that stretch reads GKQDHHHHDLPHQKGLKRNPRSRRSHDHHEVHDMNKSH. Residues 61 to 71 are compositionally biased toward basic and acidic residues; it reads KQDHHHHDLPH. The segment covering 72 to 85 has biased composition (basic residues); it reads QKGLKRNPRSRRSH. The segment covering 86–95 has biased composition (basic and acidic residues); it reads DHHEVHDMNK.

It is found in the nucleus. Functionally, may function as positive regulator of plant growth. In Arabidopsis thaliana (Mouse-ear cress), this protein is VQ motif-containing protein 17.